A 228-amino-acid polypeptide reads, in one-letter code: FtsZ-localized protein A (228 aa).

The 83-residue stretch at 3–85 (VERTLHHFPL…HIEETETEPP (83 aa)) folds into the GST N-terminal domain. Residues 90–223 (DPAERAEARR…WPGLAPAAHY (134 aa)) form the GST C-terminal domain.

This sequence belongs to the GST superfamily. As to quaternary structure, homodimer. Interacts with FtsZ filaments. Probably interacts with the GTPase domain of FtsZ.

The protein resides in the cytoplasm. Its function is as follows. Essential cell division protein that must bind to FtsZ for division to occur. Critical coordinator of envelope constriction through its interaction with FtsZ. Promotes the formation of highly curved FtsZ filaments, reduces the GTPase activity of FtsZ and stabilizes FtsZ polymers. May regulate FtsZ function by modulating its superstructure. Does not bind to glutathione. In Caulobacter vibrioides (strain NA1000 / CB15N) (Caulobacter crescentus), this protein is FtsZ-localized protein A.